The following is a 135-amino-acid chain: Thioredoxin H5 (135 aa).

Positions 13–128 (EHLDYSGGNV…LQEKFEQLNR (116 aa)) constitute a Thioredoxin domain. Active-site nucleophile residues include Cys54 and Cys57. An intrachain disulfide couples Cys54 to Cys57.

The protein belongs to the thioredoxin family. Plant H-type subfamily.

The protein localises to the cytoplasm. In terms of biological role, probable thiol-disulfide oxidoreductase that may be involved in the redox regulation of a number of cytosolic enzymes. The sequence is that of Thioredoxin H5 from Oryza sativa subsp. japonica (Rice).